Consider the following 209-residue polypeptide: Peptide deformylase 2 (209 aa).

2 residues coordinate Fe cation: cysteine 101 and histidine 149. Glutamate 150 is an active-site residue. Histidine 153 contributes to the Fe cation binding site.

It belongs to the polypeptide deformylase family. It depends on Fe(2+) as a cofactor.

It carries out the reaction N-terminal N-formyl-L-methionyl-[peptide] + H2O = N-terminal L-methionyl-[peptide] + formate. Removes the formyl group from the N-terminal Met of newly synthesized proteins. Requires at least a dipeptide for an efficient rate of reaction. N-terminal L-methionine is a prerequisite for activity but the enzyme has broad specificity at other positions. This Coxiella burnetii (strain RSA 493 / Nine Mile phase I) protein is Peptide deformylase 2.